A 236-amino-acid chain; its full sequence is 2,3,4,5-tetrahydropyridine-2,6-dicarboxylate N-acetyltransferase (236 aa).

Belongs to the transferase hexapeptide repeat family. DapH subfamily.

It carries out the reaction (S)-2,3,4,5-tetrahydrodipicolinate + acetyl-CoA + H2O = L-2-acetamido-6-oxoheptanedioate + CoA. Its pathway is amino-acid biosynthesis; L-lysine biosynthesis via DAP pathway; LL-2,6-diaminopimelate from (S)-tetrahydrodipicolinate (acetylase route): step 1/3. In terms of biological role, catalyzes the transfer of an acetyl group from acetyl-CoA to tetrahydrodipicolinate. The protein is 2,3,4,5-tetrahydropyridine-2,6-dicarboxylate N-acetyltransferase of Clostridium botulinum (strain Kyoto / Type A2).